A 371-amino-acid chain; its full sequence is Outer membrane protein P2 (371 aa).

The N-terminal stretch at 1-20 (MKKTLAALIVGAFAASAANA) is a signal peptide.

Belongs to the Gram-negative porin family. In terms of assembly, homotrimer.

The protein resides in the cell outer membrane. Forms pores that allow passive diffusion of small molecules across the outer membrane. The chain is Outer membrane protein P2 (ompP2) from Haemophilus influenzae.